A 212-amino-acid polypeptide reads, in one-letter code: Dephospho-CoA kinase (212 aa).

The DPCK domain occupies 4–204 (IVALTGGICS…RDYLKAEKTT (201 aa)). Residue 12-17 (CSGKSV) coordinates ATP.

This sequence belongs to the CoaE family.

Its subcellular location is the cytoplasm. It carries out the reaction 3'-dephospho-CoA + ATP = ADP + CoA + H(+). It participates in cofactor biosynthesis; coenzyme A biosynthesis; CoA from (R)-pantothenate: step 5/5. In terms of biological role, catalyzes the phosphorylation of the 3'-hydroxyl group of dephosphocoenzyme A to form coenzyme A. The protein is Dephospho-CoA kinase of Blochmanniella pennsylvanica (strain BPEN).